We begin with the raw amino-acid sequence, 156 residues long: Small ribosomal subunit protein uS7 (156 aa).

The protein belongs to the universal ribosomal protein uS7 family. Part of the 30S ribosomal subunit. Contacts proteins S9 and S11.

Its function is as follows. One of the primary rRNA binding proteins, it binds directly to 16S rRNA where it nucleates assembly of the head domain of the 30S subunit. Is located at the subunit interface close to the decoding center, probably blocks exit of the E-site tRNA. This is Small ribosomal subunit protein uS7 from Sinorhizobium medicae (strain WSM419) (Ensifer medicae).